We begin with the raw amino-acid sequence, 210 residues long: Large ribosomal subunit protein uL4 (210 aa).

The tract at residues 46–85 (QGTASTLTRSEVRGGGRKPYKQKGTGRARQGSIRTPLRPG) is disordered. A compositionally biased stretch (basic residues) spans 60-71 (GGRKPYKQKGTG).

It belongs to the universal ribosomal protein uL4 family. In terms of assembly, part of the 50S ribosomal subunit.

One of the primary rRNA binding proteins, this protein initially binds near the 5'-end of the 23S rRNA. It is important during the early stages of 50S assembly. It makes multiple contacts with different domains of the 23S rRNA in the assembled 50S subunit and ribosome. In terms of biological role, forms part of the polypeptide exit tunnel. This is Large ribosomal subunit protein uL4 from Prochlorococcus marinus (strain AS9601).